The sequence spans 189 residues: HTH-type transcriptional repressor LfrR (189 aa).

Residues 12–70 (ERTRRAILDAAMLVLADHPTAALGDIAAAAGVGRSTVHRYYPERTDLLRALARHVHDLS) form the HTH tetR-type domain. A DNA-binding region (H-T-H motif) is located at residues 33-52 (ALGDIAAAAGVGRSTVHRYY). The segment at 70 to 71 (SN) is proflavine binding.

Homodimer. Forms a structurally asymmetric homodimer exhibiting local unfolding and a blocked drug-binding site.

With respect to regulation, repressor activity is regulated by binding of different substrates of the LfrA multidrug efflux pump, such as acriflavine, proflavine, ethidium bromide and rhodamine 123. Binding of these ligands causes the dissociation of LfrR from the promoter, inducing lfrA expression. Functionally, represses the transcription of the lfrRA operon by binding directly to the promoter region of lfrR-lfrA. Binds specifically to a 143-bp region upstream of the lfrR gene. The protein is HTH-type transcriptional repressor LfrR of Mycolicibacterium smegmatis (strain ATCC 700084 / mc(2)155) (Mycobacterium smegmatis).